Consider the following 211-residue polypeptide: Beta-crystallin B3 (211 aa).

Met-1 is subject to N-acetylmethionine. Ala-2 bears the N-acetylalanine; in Beta-crystallin B3, N-terminally processed mark. Residues 2–23 are N-terminal arm; sequence AEQHGAPEQAAAGKSHGDLGGS. Beta/gamma crystallin 'Greek key' domains follow at residues 24-63 and 64-108; these read YKVILYELENFQGKRCELSAECPSLTDSLLEKVGSIQVES and GPWL…RPLN. Residues 109 to 113 are connecting peptide; sequence IDSPH. 2 Beta/gamma crystallin 'Greek key' domains span residues 114-155 and 156-198; these read HKLH…RAIN and GTWV…RRIR. A C-terminal arm region spans residues 200-211; the sequence is QKWHKRGRFPSS.

Belongs to the beta/gamma-crystallin family. Homo/heterodimer, or complexes of higher-order. The structure of beta-crystallin oligomers seems to be stabilized through interactions between the N-terminal arms.

Its function is as follows. Crystallins are the dominant structural components of the vertebrate eye lens. The sequence is that of Beta-crystallin B3 (CRYBB3) from Homo sapiens (Human).